Reading from the N-terminus, the 559-residue chain is Thermosome subunit alpha (559 aa).

The segment covering 535 to 547 has biased composition (basic and acidic residues); that stretch reads SEKKGGEGSKEES. The tract at residues 535–559 is disordered; the sequence is SEKKGGEGSKEESGGEGGSTPSLGD.

Belongs to the TCP-1 chaperonin family. In terms of assembly, forms a Heterooligomeric complex of two stacked eight-membered rings.

Molecular chaperone; binds unfolded polypeptides in vitro, and has a weak ATPase activity. This Saccharolobus solfataricus (strain ATCC 35092 / DSM 1617 / JCM 11322 / P2) (Sulfolobus solfataricus) protein is Thermosome subunit alpha (thsA).